The primary structure comprises 115 residues: Replication initiation control protein YabA (115 aa).

The Zn(2+) site is built by H90, C92, C106, and C109.

It belongs to the YabA family. Homotetramer. Interacts with both DnaA and DnaN, acting as a bridge between these two proteins. The cofactor is Zn(2+).

Its subcellular location is the cytoplasm. The protein localises to the nucleoid. Functionally, involved in control of chromosome replication initiation. Inhibits the cooperative binding of DnaA to the oriC region, thus negatively regulating initiation of chromosome replication. Inhibits the ability of DnaA-ATP to form a helix on DNA; does not disassemble preformed DnaA-DNA helices. Decreases the residence time of DnaA on the chromosome at its binding sites (oriC, replication forks and promoter-binding sites). Tethers DnaA to the replication machinery via the DNA polymerase beta sliding clamp subunit (dnaN). Associates with oriC and other DnaA targets on the chromosome in a DnaA-dependent manner. This Staphylococcus epidermidis (strain ATCC 35984 / DSM 28319 / BCRC 17069 / CCUG 31568 / BM 3577 / RP62A) protein is Replication initiation control protein YabA.